We begin with the raw amino-acid sequence, 560 residues long: Dihydroxy-acid dehydratase (560 aa).

Residue aspartate 78 participates in Mg(2+) binding. [2Fe-2S] cluster is bound at residue cysteine 119. Aspartate 120 and lysine 121 together coordinate Mg(2+). An N6-carboxylysine modification is found at lysine 121. Residue cysteine 192 coordinates [2Fe-2S] cluster. Glutamate 446 is a binding site for Mg(2+). The active-site Proton acceptor is the serine 472.

The protein belongs to the IlvD/Edd family. Homodimer. [2Fe-2S] cluster is required as a cofactor. Mg(2+) serves as cofactor.

It carries out the reaction (2R)-2,3-dihydroxy-3-methylbutanoate = 3-methyl-2-oxobutanoate + H2O. The catalysed reaction is (2R,3R)-2,3-dihydroxy-3-methylpentanoate = (S)-3-methyl-2-oxopentanoate + H2O. It participates in amino-acid biosynthesis; L-isoleucine biosynthesis; L-isoleucine from 2-oxobutanoate: step 3/4. The protein operates within amino-acid biosynthesis; L-valine biosynthesis; L-valine from pyruvate: step 3/4. Functionally, functions in the biosynthesis of branched-chain amino acids. Catalyzes the dehydration of (2R,3R)-2,3-dihydroxy-3-methylpentanoate (2,3-dihydroxy-3-methylvalerate) into 2-oxo-3-methylpentanoate (2-oxo-3-methylvalerate) and of (2R)-2,3-dihydroxy-3-methylbutanoate (2,3-dihydroxyisovalerate) into 2-oxo-3-methylbutanoate (2-oxoisovalerate), the penultimate precursor to L-isoleucine and L-valine, respectively. The chain is Dihydroxy-acid dehydratase from Anaeromyxobacter dehalogenans (strain 2CP-C).